The chain runs to 141 residues: Hemoglobin subunit alpha (141 aa).

The Globin domain maps to 1 to 141; that stretch reads VLSPADKTNV…VSTVLTSKYR (141 aa). A Phosphoserine modification is found at S3. At K7 the chain carries N6-succinyllysine. The residue at position 8 (T8) is a Phosphothreonine. K11 is modified (N6-succinyllysine). N6-acetyllysine; alternate is present on K16. N6-succinyllysine; alternate is present on K16. Y24 is subject to Phosphotyrosine. Phosphoserine is present on S35. N6-succinyllysine is present on K40. S49 is subject to Phosphoserine. Residue H58 coordinates O2. H87 contributes to the heme b binding site. S102 carries the post-translational modification Phosphoserine. A Phosphothreonine modification is found at T108. Phosphoserine occurs at positions 124 and 131. A phosphothreonine mark is found at T134 and T137. Phosphoserine is present on S138.

This sequence belongs to the globin family. As to quaternary structure, heterotetramer of two alpha chains and two beta chains. As to expression, red blood cells.

Its function is as follows. Involved in oxygen transport from the lung to the various peripheral tissues. This chain is Hemoglobin subunit alpha, found in Otospermophilus beecheyi (California ground squirrel).